We begin with the raw amino-acid sequence, 448 residues long: Trigger factor (448 aa).

The 86-residue stretch at 173-258 (SDRVTIDFVG…LKQIEWAHMP (86 aa)) folds into the PPIase FKBP-type domain.

This sequence belongs to the FKBP-type PPIase family. Tig subfamily.

Its subcellular location is the cytoplasm. It catalyses the reaction [protein]-peptidylproline (omega=180) = [protein]-peptidylproline (omega=0). Involved in protein export. Acts as a chaperone by maintaining the newly synthesized protein in an open conformation. Functions as a peptidyl-prolyl cis-trans isomerase. In Herminiimonas arsenicoxydans, this protein is Trigger factor.